We begin with the raw amino-acid sequence, 195 residues long: MKIWTSEHVFDHPWETVTTAAMQKYPNPMNPSVVGVDVLDRHVDPSGKLHSHRLLSTEWGLPSIVKSLIGAARTKTYVQEHSVVDPVTRTMELKSTNISFTNMVSVDERLTYKPHLQDPEKTVLTQEALITVKGVSLSSYLEGLMASTISSNASKGREAMEWVIHKLNAEIEELAASARGSIRTPMAAAAALVDK.

Residues 1-172 (MKIWTSEHVF…VIHKLNAEIE (172 aa)) enclose the PRELI/MSF1 domain. Phosphoserine occurs at positions 46 and 51.

Belongs to the slowmo family.

The sequence is that of PRELI domain containing protein 3B (Prelid3b) from Mus musculus (Mouse).